We begin with the raw amino-acid sequence, 336 residues long: Protein-glutamate methylesterase/protein-glutamine glutaminase 3 (336 aa).

Positions 2 to 119 (KIAIVNDMPM…PNPREAAAPL (118 aa)) constitute a Response regulatory domain. Position 53 is a 4-aspartylphosphate (D53). The 190-residue stretch at 147–336 (VSRRDRLVAI…APRLMEVFTQ (190 aa)) folds into the CheB-type methylesterase domain. Residues S159, H186, and D279 contribute to the active site.

This sequence belongs to the CheB family. Post-translationally, phosphorylated by CheA. Phosphorylation of the N-terminal regulatory domain activates the methylesterase activity.

It localises to the cytoplasm. The catalysed reaction is [protein]-L-glutamate 5-O-methyl ester + H2O = L-glutamyl-[protein] + methanol + H(+). It carries out the reaction L-glutaminyl-[protein] + H2O = L-glutamyl-[protein] + NH4(+). In terms of biological role, involved in chemotaxis. Part of a chemotaxis signal transduction system that modulates chemotaxis in response to various stimuli. Catalyzes the demethylation of specific methylglutamate residues introduced into the chemoreceptors (methyl-accepting chemotaxis proteins or MCP) by CheR. Also mediates the irreversible deamidation of specific glutamine residues to glutamic acid. The chain is Protein-glutamate methylesterase/protein-glutamine glutaminase 3 from Pseudomonas syringae pv. tomato (strain ATCC BAA-871 / DC3000).